A 209-amino-acid chain; its full sequence is Ribosomal RNA large subunit methyltransferase E (209 aa).

Residues glycine 63, tryptophan 65, aspartate 83, aspartate 99, and aspartate 124 each coordinate S-adenosyl-L-methionine. The active-site Proton acceptor is the lysine 164.

The protein belongs to the class I-like SAM-binding methyltransferase superfamily. RNA methyltransferase RlmE family.

The protein resides in the cytoplasm. It catalyses the reaction uridine(2552) in 23S rRNA + S-adenosyl-L-methionine = 2'-O-methyluridine(2552) in 23S rRNA + S-adenosyl-L-homocysteine + H(+). Functionally, specifically methylates the uridine in position 2552 of 23S rRNA at the 2'-O position of the ribose in the fully assembled 50S ribosomal subunit. In Pseudoalteromonas atlantica (strain T6c / ATCC BAA-1087), this protein is Ribosomal RNA large subunit methyltransferase E.